A 421-amino-acid chain; its full sequence is C2 calcium-dependent domain-containing protein 4C (421 aa).

Disordered stretches follow at residues 13–97, 119–140, 158–228, and 250–303; these read RGSG…AKLA, DWLSEEATDADPQAQGAMSLPS, HTRR…SPFG, and VSQL…TVHV. Polar residues predominate over residues 215-228; that stretch reads ESDTGSSAESSPFG. 3 positions are modified to phosphoserine: Ser-262, Ser-264, and Ser-273. The 117-residue stretch at 305–421 folds into the C2 domain; it reads PRGSVRLLAE…LPLTSLLPFL (117 aa).

Belongs to the C2CD4 family.

The polypeptide is C2 calcium-dependent domain-containing protein 4C (C2CD4C) (Homo sapiens (Human)).